The chain runs to 624 residues: MKGQETRGFQSEVKQLLHLMIHSLYSNKEIFLRELISNASDAADKLRFRALSNPDLYEGDGELRVRVSFDKDKRTLTIADNGVGMNRDEVIDHLGTIAKSGTKSFLESMGSDQAKDSQLIGQFGVGFYSAFIVADKVTVRTRAAGDKPENGVFWESAGEGEYTVADITKNDRGTEITLHLREGEDEFLDDWRVRSIISKYSDHIALPVEIEKREEKDGETVISWEKINKAQALWTRNKSEIKDDEYNEFYKHIAHDFTDPLTWSHNRVEGKQEYTSLLYIPSQAPWDLWNRDHKHGLKLYVQRVFIMDDAEQFMPNYLRFVRGLIDSNDLPLNVSREILQDSTVTRNLRSALTKRVLQMLEKLAKDDAEKYQTFWKQFGLVLKEGPAEDHANQEAIAKLLRFASTHTDSSAQTVSLEDYVSRMKEGQEKIYYITADSYAAAKNSPHLELLRKKGIEVLLLSDRIDEWMMNYLTEFDGKAFQSVAKADESIEKLADEVDENAKEAEKALEPFVERVKTLLGDRVKEVRLTHRLTDTPAIVTTDADEMSTQMAKLFAAAGQSVPEVKYIFELNPDHVLVKRTADTKDEAQFKEWVELLLDQALFAERGTLEDPNQFIRRMNQLLVS.

The segment at 1-336 (MKGQETRGFQ…SNDLPLNVSR (336 aa)) is a; substrate-binding. Residues 337-552 (EILQDSTVTR…ADEMSTQMAK (216 aa)) are b. A c region spans residues 553 to 624 (LFAAAGQSVP…IRRMNQLLVS (72 aa)).

It belongs to the heat shock protein 90 family. In terms of assembly, homodimer.

Its subcellular location is the cytoplasm. Functionally, molecular chaperone. Has ATPase activity. In Salmonella typhi, this protein is Chaperone protein HtpG.